The sequence spans 274 residues: Tryptophan synthase alpha chain (274 aa).

Residues E49 and D60 each act as proton acceptor in the active site.

The protein belongs to the TrpA family. As to quaternary structure, tetramer of two alpha and two beta chains.

The catalysed reaction is (1S,2R)-1-C-(indol-3-yl)glycerol 3-phosphate + L-serine = D-glyceraldehyde 3-phosphate + L-tryptophan + H2O. Its pathway is amino-acid biosynthesis; L-tryptophan biosynthesis; L-tryptophan from chorismate: step 5/5. Its function is as follows. The alpha subunit is responsible for the aldol cleavage of indoleglycerol phosphate to indole and glyceraldehyde 3-phosphate. The polypeptide is Tryptophan synthase alpha chain (Zymomonas mobilis subsp. mobilis (strain ATCC 31821 / ZM4 / CP4)).